Reading from the N-terminus, the 361-residue chain is Phosphoserine aminotransferase (361 aa).

L-glutamate contacts are provided by serine 9 and arginine 42. Residues 76 to 77, tryptophan 103, threonine 153, aspartate 173, and glutamine 196 each bind pyridoxal 5'-phosphate; that span reads AR. Lysine 197 is modified (N6-(pyridoxal phosphate)lysine). A pyridoxal 5'-phosphate-binding site is contributed by 238–239; the sequence is NT.

Belongs to the class-V pyridoxal-phosphate-dependent aminotransferase family. SerC subfamily. As to quaternary structure, homodimer. Pyridoxal 5'-phosphate is required as a cofactor.

It is found in the cytoplasm. The enzyme catalyses O-phospho-L-serine + 2-oxoglutarate = 3-phosphooxypyruvate + L-glutamate. The catalysed reaction is 4-(phosphooxy)-L-threonine + 2-oxoglutarate = (R)-3-hydroxy-2-oxo-4-phosphooxybutanoate + L-glutamate. The protein operates within amino-acid biosynthesis; L-serine biosynthesis; L-serine from 3-phospho-D-glycerate: step 2/3. It functions in the pathway cofactor biosynthesis; pyridoxine 5'-phosphate biosynthesis; pyridoxine 5'-phosphate from D-erythrose 4-phosphate: step 3/5. Its function is as follows. Catalyzes the reversible conversion of 3-phosphohydroxypyruvate to phosphoserine and of 3-hydroxy-2-oxo-4-phosphonooxybutanoate to phosphohydroxythreonine. This Wigglesworthia glossinidia brevipalpis protein is Phosphoserine aminotransferase.